We begin with the raw amino-acid sequence, 252 residues long: 3-deoxy-manno-octulosonate cytidylyltransferase (252 aa).

Belongs to the KdsB family.

It is found in the cytoplasm. It catalyses the reaction 3-deoxy-alpha-D-manno-oct-2-ulosonate + CTP = CMP-3-deoxy-beta-D-manno-octulosonate + diphosphate. Its pathway is nucleotide-sugar biosynthesis; CMP-3-deoxy-D-manno-octulosonate biosynthesis; CMP-3-deoxy-D-manno-octulosonate from 3-deoxy-D-manno-octulosonate and CTP: step 1/1. The protein operates within bacterial outer membrane biogenesis; lipopolysaccharide biosynthesis. Functionally, activates KDO (a required 8-carbon sugar) for incorporation into bacterial lipopolysaccharide in Gram-negative bacteria. In Solibacter usitatus (strain Ellin6076), this protein is 3-deoxy-manno-octulosonate cytidylyltransferase.